The chain runs to 383 residues: Pyruvate synthase subunit PorA (383 aa).

As to quaternary structure, heterotetramer of one alpha, one beta, one delta and one gamma chain.

The enzyme catalyses 2 oxidized [2Fe-2S]-[ferredoxin] + pyruvate + CoA = 2 reduced [2Fe-2S]-[ferredoxin] + acetyl-CoA + CO2 + H(+). This chain is Pyruvate synthase subunit PorA (porA), found in Methanothermobacter thermautotrophicus (strain ATCC 29096 / DSM 1053 / JCM 10044 / NBRC 100330 / Delta H) (Methanobacterium thermoautotrophicum).